The following is a 288-amino-acid chain: ATP synthase gamma chain (288 aa).

The protein belongs to the ATPase gamma chain family. In terms of assembly, F-type ATPases have 2 components, CF(1) - the catalytic core - and CF(0) - the membrane proton channel. CF(1) has five subunits: alpha(3), beta(3), gamma(1), delta(1), epsilon(1). CF(0) has three main subunits: a, b and c.

Its subcellular location is the cell membrane. Functionally, produces ATP from ADP in the presence of a proton gradient across the membrane. The gamma chain is believed to be important in regulating ATPase activity and the flow of protons through the CF(0) complex. The protein is ATP synthase gamma chain of Shouchella clausii (strain KSM-K16) (Alkalihalobacillus clausii).